A 380-amino-acid polypeptide reads, in one-letter code: GPI-anchor transamidase (380 aa).

A signal peptide spans 1 to 19; the sequence is MIVQFVALLLLNLLQIIAA. Over 20–354 the chain is Lumenal; sequence ESSHTNNWAV…TRELKYKKHP (335 aa). Catalysis depends on residues His-145 and Cys-187. N-linked (GlcNAc...) asparagine glycosylation occurs at Asn-307. A helical membrane pass occupies residues 355 to 375; the sequence is ISRIISAVVCISFSIGFPYYA. Residues 376 to 380 are Cytoplasmic-facing; that stretch reads SKYLK.

The protein belongs to the peptidase C13 family. As to quaternary structure, forms a complex with PIG-T homolog, PIG-U homolog and PIG-S homolog. In terms of processing, the disulfide bond between PIGK/GPI8 and PIGT is important for normal enzyme activity.

It localises to the endoplasmic reticulum membrane. Its pathway is glycolipid biosynthesis; glycosylphosphatidylinositol-anchor biosynthesis. Functionally, mediates GPI anchoring in the endoplasmic reticulum, by replacing a protein's C-terminal GPI attachment signal peptide with a pre-assembled GPI. During this transamidation reaction, the GPI transamidase forms a carbonyl intermediate with the substrate protein. The chain is GPI-anchor transamidase (gpi8) from Schizosaccharomyces pombe (strain 972 / ATCC 24843) (Fission yeast).